Here is a 497-residue protein sequence, read N- to C-terminus: Tripartite motif-containing protein 5 (497 aa).

An N-acetylalanine modification is found at A2. The RING-type zinc finger occupies 15–60 (CPICLELLTEPLSLHCGHSFCQACITANHKKSMLYKEGERSCPVCR). Position 87 is a phosphoserine (S87). The segment at 92–133 (QKVDHCARHGEKLLLFCQEDSKVICWLCERSQEHRGHHTFLM) adopts a B box-type zinc-finger fold. Zn(2+)-binding residues include C97, H100, C119, and H125. A coiled-coil region spans residues 137 to 225 (AQEYHVKLQT…LTKSETEMVQ (89 aa)). Residues 187 to 200 (FEQLREILDWEESN) are required for interaction with GABARAP and for autophagy. Residues 283-497 (LKGMLDMFRE…VPMTLCSPSS (215 aa)) enclose the B30.2/SPRY domain.

This sequence belongs to the TRIM/RBCC family. Can form homodimers and homotrimers. In addition to lower-order dimerization, also exhibits a higher-order multimerization and both low- and high-order multimerizations are essential for its restriction activity. Interacts with MAP3K7/TAK1, TAB2 and TAB3. Interacts with HSPA8/HSC70, PSMC2, PSMC4, PSMC5 and PSMD7. Interacts with SQSTM1. Interacts (via B30.2/SPRY domain) with HSPA1A/B. Interacts with TRIM6 and TRIM34. Interacts with BECN1; GABARAP. Interacts with ULK1 (phosphorylated form), GABARAPL1, GABARAPL2, MAP1LC3A and MAP1LC3C. Post-translationally, degraded in a proteasome-independent fashion in the absence of viral infection but in a proteasome-dependent fashion following exposure to restriction sensitive virus. In terms of processing, autoubiquitinated in a RING finger- and UBE2D2-dependent manner. Monoubiquitinated by TRIM21. Deubiquitinated by Yersinia YopJ. Ubiquitination may not lead to proteasomal degradation.

The protein resides in the cytoplasm. It is found in the nucleus. It carries out the reaction S-ubiquitinyl-[E2 ubiquitin-conjugating enzyme]-L-cysteine + [acceptor protein]-L-lysine = [E2 ubiquitin-conjugating enzyme]-L-cysteine + N(6)-ubiquitinyl-[acceptor protein]-L-lysine.. It functions in the pathway protein modification; protein ubiquitination. Capsid-specific restriction factor that prevents infection from non-host-adapted retroviruses. Blocks viral replication early in the life cycle, after viral entry but before reverse transcription. In addition to acting as a capsid-specific restriction factor, also acts as a pattern recognition receptor that activates innate immune signaling in response to the retroviral capsid lattice. Binding to the viral capsid triggers its E3 ubiquitin ligase activity, and in concert with the heterodimeric ubiquitin conjugating enzyme complex UBE2V1-UBE2N (also known as UBC13-UEV1A complex) generates 'Lys-63'-linked polyubiquitin chains, which in turn are catalysts in the autophosphorylation of the MAP3K7/TAK1 complex (includes TAK1, TAB2, and TAB3). Activation of the MAP3K7/TAK1 complex by autophosphorylation results in the induction and expression of NF-kappa-B and MAPK-responsive inflammatory genes, thereby leading to an innate immune response in the infected cell. Restricts infection by human immunodeficiency virus type 1 (HIV-1) and simian immunodeficiency virus (SIV-agm). Plays a role in regulating autophagy through activation of autophagy regulator BECN1 by causing its dissociation from its inhibitors BCL2 and TAB2. Also plays a role in autophagy by acting as a selective autophagy receptor which recognizes and targets HIV-1 capsid protein p24 for autophagic destruction. The polypeptide is Tripartite motif-containing protein 5 (TRIM5) (Macaca mulatta (Rhesus macaque)).